The chain runs to 257 residues: Coenzyme F420:L-glutamate ligase (257 aa).

Residues 9 to 12 (VPEV), 38 to 39 (ST), and Lys-43 each bind GTP. Asp-113 serves as a coordination point for a divalent metal cation. Asn-116 contributes to the GTP binding site. Residues Asp-154, Thr-155, and Glu-212 each coordinate a divalent metal cation. Residue 210 to 217 (TGEGDGGT) participates in GTP binding.

Belongs to the CofE family. Homodimer. Requires Mg(2+) as cofactor. Mn(2+) serves as cofactor. It depends on K(+) as a cofactor.

The catalysed reaction is oxidized coenzyme F420-0 + GTP + L-glutamate = oxidized coenzyme F420-1 + GDP + phosphate + H(+). The enzyme catalyses oxidized coenzyme F420-1 + GTP + L-glutamate = oxidized coenzyme F420-2 + GDP + phosphate + H(+). Its pathway is cofactor biosynthesis; coenzyme F420 biosynthesis. Catalyzes the GTP-dependent successive addition of two or more gamma-linked L-glutamates to the L-lactyl phosphodiester of 7,8-didemethyl-8-hydroxy-5-deazariboflavin (F420-0) to form coenzyme F420-0-glutamyl-glutamate (F420-2) or polyglutamated F420 derivatives. This is Coenzyme F420:L-glutamate ligase from Haloarcula marismortui (strain ATCC 43049 / DSM 3752 / JCM 8966 / VKM B-1809) (Halobacterium marismortui).